A 134-amino-acid chain; its full sequence is ATP synthase epsilon chain, chloroplastic (134 aa).

Belongs to the ATPase epsilon chain family. In terms of assembly, F-type ATPases have 2 components, CF(1) - the catalytic core - and CF(0) - the membrane proton channel. CF(1) has five subunits: alpha(3), beta(3), gamma(1), delta(1), epsilon(1). CF(0) has three main subunits: a, b and c.

The protein resides in the plastid. It is found in the chloroplast thylakoid membrane. Its function is as follows. Produces ATP from ADP in the presence of a proton gradient across the membrane. The sequence is that of ATP synthase epsilon chain, chloroplastic from Drimys granadensis.